A 318-amino-acid polypeptide reads, in one-letter code: Aspartate carbamoyltransferase catalytic subunit (318 aa).

Carbamoyl phosphate is bound by residues arginine 64 and threonine 65. Residue lysine 92 participates in L-aspartate binding. Carbamoyl phosphate is bound by residues arginine 114, histidine 142, and glutamine 145. Positions 176 and 230 each coordinate L-aspartate. Carbamoyl phosphate-binding residues include glycine 271 and proline 272.

It belongs to the aspartate/ornithine carbamoyltransferase superfamily. ATCase family. Heterododecamer (2C3:3R2) of six catalytic PyrB chains organized as two trimers (C3), and six regulatory PyrI chains organized as three dimers (R2).

It catalyses the reaction carbamoyl phosphate + L-aspartate = N-carbamoyl-L-aspartate + phosphate + H(+). Its pathway is pyrimidine metabolism; UMP biosynthesis via de novo pathway; (S)-dihydroorotate from bicarbonate: step 2/3. Functionally, catalyzes the condensation of carbamoyl phosphate and aspartate to form carbamoyl aspartate and inorganic phosphate, the committed step in the de novo pyrimidine nucleotide biosynthesis pathway. The polypeptide is Aspartate carbamoyltransferase catalytic subunit (Desulfovibrio desulfuricans (strain ATCC 27774 / DSM 6949 / MB)).